The chain runs to 262 residues: Protein FLOURY 2 (262 aa).

An N-terminal signal peptide occupies residues 1-21 (MATKILALLALLALLVSATNA).

Belongs to the zein family.

It is found in the endoplasmic reticulum membrane. Its function is as follows. Zeins are major seed storage proteins. This Zea mays (Maize) protein is Protein FLOURY 2.